The chain runs to 173 residues: 2-C-methyl-D-erythritol 2,4-cyclodiphosphate synthase (173 aa).

Residues aspartate 17 and histidine 19 each coordinate a divalent metal cation. 4-CDP-2-C-methyl-D-erythritol 2-phosphate contacts are provided by residues 17 to 19 and 49 to 50; these read DVH and HS. Histidine 57 lines the a divalent metal cation pocket. 4-CDP-2-C-methyl-D-erythritol 2-phosphate contacts are provided by residues 76–80, 147–150, and arginine 157; these read FPNTD and TTTE.

It belongs to the IspF family. As to quaternary structure, homotrimer. A divalent metal cation is required as a cofactor.

The catalysed reaction is 4-CDP-2-C-methyl-D-erythritol 2-phosphate = 2-C-methyl-D-erythritol 2,4-cyclic diphosphate + CMP. Its pathway is isoprenoid biosynthesis; isopentenyl diphosphate biosynthesis via DXP pathway; isopentenyl diphosphate from 1-deoxy-D-xylulose 5-phosphate: step 4/6. Its function is as follows. Involved in the biosynthesis of isopentenyl diphosphate (IPP) and dimethylallyl diphosphate (DMAPP), two major building blocks of isoprenoid compounds. Catalyzes the conversion of 4-diphosphocytidyl-2-C-methyl-D-erythritol 2-phosphate (CDP-ME2P) to 2-C-methyl-D-erythritol 2,4-cyclodiphosphate (ME-CPP) with a corresponding release of cytidine 5-monophosphate (CMP). This chain is 2-C-methyl-D-erythritol 2,4-cyclodiphosphate synthase, found in Ehrlichia ruminantium (strain Gardel).